A 248-amino-acid polypeptide reads, in one-letter code: Small ribosomal subunit protein uS3 (248 aa).

Residues 39 to 111 (IRKYLNKVYK…EIVFNVVEVK (73 aa)) form the KH type-2 domain. The interval 222–248 (KPFEASAPRPQRRNRKEANNYVNAKKN) is disordered.

Belongs to the universal ribosomal protein uS3 family. Part of the 30S ribosomal subunit. Forms a tight complex with proteins S10 and S14.

Its function is as follows. Binds the lower part of the 30S subunit head. Binds mRNA in the 70S ribosome, positioning it for translation. In Alteracholeplasma palmae (strain ATCC 49389 / J233) (Acholeplasma palmae), this protein is Small ribosomal subunit protein uS3.